The following is a 562-amino-acid chain: MNINVADLLNGNYILLLFVVLSLGLCLGKLRLGPVQLGNSIGVLVVSLLLGQQHFSINTEALSLGFMLFIFCVGVEAGPNFFSIFFRDGKNYFMLALVMVGSAMLLALGLGKLFGWGIGLTAGMLAGSMTSTPVLVGAGDTLRNTASLGGQLGVEQDHLSLGYALTYLVGLVSLIFGARYLPKLQHQDLPTSAQQIARERGLDVDSQRKVYLPVIRAYRVGPELVDWAAGKNLRELGIYRQTGCYIERIRRNGILANPDGDAVLQIGDEIALVGYPDAHSRLNSNFRDGKEVFDRNLLDMRIVTEEIVVKNHNAVGKRLSQLKLTDHGCFLNRIVRSQIEMPLDDNVVLNKGDVLQVSGDARRVKSIAERIGFISIHSQVTDLLAFCAFFVIGVMVGLITIQFSNFTFGIGNAAGLLFAGIMLGFLRANHPTFGYIPQGALNMVKEFGLMVFMAGVGLSAGSTINSSLGEVGIQMLASGLIVSLVPVVICFLFGAYVLKMNRALLFGAMMGARTCAPAMEIISDTARSNIPALGYAGTYAIANVLLTLAGSLIVVIWPELPG.

Transmembrane regions (helical) follow at residues 8–28, 32–52, 66–86, 93–113, 116–136, and 158–178; these read LLNG…LCLG, LGPV…LLGQ, FMLF…SIFF, FMLA…LGKL, WGIG…PVLV, and HLSL…IFGA. RCK C-terminal domains lie at 202–288 and 290–373; these read LDVD…NFRD and KEVF…RIGF. A run of 5 helical transmembrane segments spans residues 383–403, 406–426, 447–467, 478–498, and 537–557; these read LLAF…TIQF, FTFG…LGFL, FGLM…INSS, SGLI…AYVL, and GTYA…VVIW.

It belongs to the AAE transporter (TC 2.A.81) family. YbjL subfamily.

The protein localises to the cell membrane. In Pectobacterium atrosepticum (strain SCRI 1043 / ATCC BAA-672) (Erwinia carotovora subsp. atroseptica), this protein is Putative transport protein ECA2683.